We begin with the raw amino-acid sequence, 85 residues long: UPF0473 protein CPR_1590 (85 aa).

Belongs to the UPF0473 family.

The polypeptide is UPF0473 protein CPR_1590 (Clostridium perfringens (strain SM101 / Type A)).